We begin with the raw amino-acid sequence, 377 residues long: Erythronate-4-phosphate dehydrogenase (377 aa).

S45 and T66 together coordinate substrate. D146 and T175 together coordinate NAD(+). R208 is a catalytic residue. An NAD(+)-binding site is contributed by D232. E237 is a catalytic residue. The active-site Proton donor is H254. Position 257 (G257) interacts with NAD(+). Residue Y258 coordinates substrate.

It belongs to the D-isomer specific 2-hydroxyacid dehydrogenase family. PdxB subfamily. As to quaternary structure, homodimer.

Its subcellular location is the cytoplasm. The catalysed reaction is 4-phospho-D-erythronate + NAD(+) = (R)-3-hydroxy-2-oxo-4-phosphooxybutanoate + NADH + H(+). It functions in the pathway cofactor biosynthesis; pyridoxine 5'-phosphate biosynthesis; pyridoxine 5'-phosphate from D-erythrose 4-phosphate: step 2/5. Its function is as follows. Catalyzes the oxidation of erythronate-4-phosphate to 3-hydroxy-2-oxo-4-phosphonooxybutanoate. This Sodalis glossinidius (strain morsitans) protein is Erythronate-4-phosphate dehydrogenase.